The chain runs to 359 residues: Ribosomal RNA large subunit methyltransferase M (359 aa).

Residues serine 186, 219–222, aspartate 238, aspartate 258, and aspartate 275 each bind S-adenosyl-L-methionine; that span reads CPGG. Lysine 304 (proton acceptor) is an active-site residue.

The protein belongs to the class I-like SAM-binding methyltransferase superfamily. RNA methyltransferase RlmE family. RlmM subfamily. In terms of assembly, monomer.

It localises to the cytoplasm. The catalysed reaction is cytidine(2498) in 23S rRNA + S-adenosyl-L-methionine = 2'-O-methylcytidine(2498) in 23S rRNA + S-adenosyl-L-homocysteine + H(+). Catalyzes the 2'-O-methylation at nucleotide C2498 in 23S rRNA. The sequence is that of Ribosomal RNA large subunit methyltransferase M from Vibrio parahaemolyticus serotype O3:K6 (strain RIMD 2210633).